The primary structure comprises 311 residues: DNA-directed RNA polymerase subunit alpha (311 aa).

An alpha N-terminal domain (alpha-NTD) region spans residues 1–227; it reads MAQFQIECIE…NLFCSLRNLD (227 aa). The interval 239–311 is alpha C-terminal domain (alpha-CTD); it reads DKKISQVLIE…GISLPKEKSD (73 aa).

This sequence belongs to the RNA polymerase alpha chain family. In terms of assembly, in plastids the minimal PEP RNA polymerase catalytic core is composed of four subunits: alpha, beta, beta', and beta''. When a (nuclear-encoded) sigma factor is associated with the core the holoenzyme is formed, which can initiate transcription.

Its subcellular location is the plastid. It localises to the chloroplast. The catalysed reaction is RNA(n) + a ribonucleoside 5'-triphosphate = RNA(n+1) + diphosphate. DNA-dependent RNA polymerase catalyzes the transcription of DNA into RNA using the four ribonucleoside triphosphates as substrates. The protein is DNA-directed RNA polymerase subunit alpha of Pyropia yezoensis (Susabi-nori).